We begin with the raw amino-acid sequence, 363 residues long: NAD-dependent epimerase/dehydratase tndE (363 aa).

Residues 10 to 30 traverse the membrane as a helical segment; that stretch reads GLVLITGVNGFLASHLALQLI. Tyrosine 176 is a binding site for NADP(+).

The protein belongs to the NAD(P)-dependent epimerase/dehydratase family. Dihydroflavonol-4-reductase subfamily.

The protein localises to the membrane. Its pathway is secondary metabolite biosynthesis; terpenoid biosynthesis. Functionally, NAD-dependent epimerase/dehydratase; part of the gene cluster that mediates the biosynthesis of talaronoid C, a fusicoccane diterpenoid with an unprecedented tricyclic 5/8/6 ring system. The first step in the pathway is performed by the fusicoccadiene synthase tndC that possesses both prenyl transferase and terpene cyclase activity, converting isopentenyl diphosphate and dimethylallyl diphosphate into geranylgeranyl diphosphate (GGDP) and further converting GGDP into talarodiene, a precursor for talaronoid C. The remaining enzymes from the cluster include the cytochrome P450 monooxygenase tndB, the aldehyde reductase tndE and the alcohol dehydrogenase tndF that are involved in the conversion of talarodiene into talaronoid C. This Aspergillus flavipes protein is NAD-dependent epimerase/dehydratase tndE.